Reading from the N-terminus, the 87-residue chain is Ragulator complex protein LAMTOR4 homolog (87 aa).

Belongs to the LAMTOR4 family. As to quaternary structure, part of the Ragulator complex.

The protein resides in the lysosome. In terms of biological role, regulator of the TOR pathway, a signaling cascade that promotes cell growth in response to growth factors, energy levels, and amino acids. As part of the Ragulator complex, may activate the TOR signaling cascade in response to amino acids. This is Ragulator complex protein LAMTOR4 homolog from Dictyostelium discoideum (Social amoeba).